Reading from the N-terminus, the 488-residue chain is Solute carrier family 41 member 3 (488 aa).

Composition is skewed to basic and acidic residues over residues 1 to 19 and 27 to 36; these read MEGT…RLKE and DAGRLPKASE. Residues 1-36 form a disordered region; sequence MEGTEARQRRLEGCGRLKELGPLPSHDAGRLPKASE. The next 9 membrane-spanning stretches (helical) occupy residues 63-83, 147-167, 189-209, 220-240, 251-271, 284-304, 377-397, 406-426, and 450-470; these read LIIG…LSWA, LAVV…ASLM, VITA…IVIG, IATP…LALM, WYLT…WLFI, YGWF…LILS, VLLF…CLVE, IFIL…LYLA, and GLGD…DWLL.

It belongs to the SLC41A transporter family.

The protein resides in the mitochondrion inner membrane. It catalyses the reaction Mg(2+)(in) + 2 Na(+)(out) = Mg(2+)(out) + 2 Na(+)(in). Functionally, na(+)/Mg(2+) ion exchanger that acts as a predominant Mg(2+) efflux system at the mitochondrial inner membrane. The polypeptide is Solute carrier family 41 member 3 (Slc41a3) (Mus musculus (Mouse)).